The primary structure comprises 883 residues: Integrator complex subunit 6-A (883 aa).

The 225-residue stretch at 3–227 (ILLFLLDTSA…QCLESLVQKV (225 aa)) folds into the VWFA domain. The short motif at 626-633 (MMIDEADE) is the Inhibitory loop element.

Belongs to the Integrator subunit 6 family. As to quaternary structure, component of the Integrator complex, composed of core subunits INTS1, INTS2, INTS3, INTS4, INTS5, INTS6, INTS7, INTS8, INTS9/RC74, INTS10, INTS11/CPSF3L, INTS12, INTS13, INTS14 and INTS15. The core complex associates with protein phosphatase 2A subunits PPP2CA and PPP2R1A, to form the Integrator-PP2A (INTAC) complex.

It is found in the nucleus. The protein localises to the chromosome. Component of the integrator complex, a multiprotein complex that terminates RNA polymerase II (Pol II) transcription in the promoter-proximal region of genes. The integrator complex provides a quality checkpoint during transcription elongation by driving premature transcription termination of transcripts that are unfavorably configured for transcriptional elongation: the complex terminates transcription by (1) catalyzing dephosphorylation of the C-terminal domain (CTD) of Pol II subunit POLR2A/RPB1 and SUPT5H/SPT5, (2) degrading the exiting nascent RNA transcript via endonuclease activity and (3) promoting the release of Pol II from bound DNA. The integrator complex is also involved in terminating the synthesis of non-coding Pol II transcripts, such as enhancer RNAs (eRNAs), small nuclear RNAs (snRNAs), telomerase RNAs and long non-coding RNAs (lncRNAs). Within the integrator complex, INTS6 acts as a molecular adapter that promotes assembly of protein phosphatase 2A (PP2A) subunits to the integrator core complex, promoting recruitment of PP2A to transcription pause-release checkpoint. The polypeptide is Integrator complex subunit 6-A (ints6-a) (Xenopus laevis (African clawed frog)).